A 106-amino-acid polypeptide reads, in one-letter code: Halilectin 3, beta chain (106 aa).

N-linked (GlcNAc...) asparagine glycosylation occurs at N65.

As to quaternary structure, probable heterotrimer consisting of an alpha chain and two beta chains. The alpha chain can probably have different glycosylation states. In terms of processing, glycosylated.

Lectin with affinity for N-acetyl-galactosamine, carragenan and glycoprotein porcine stomach mucin (PSM). Has metal-independent hemagglutinating activity towards erythrocytes from rabbit and human. Hemagglutinating activity is not inhibited by D-galactose, D-glucose, D-mannose, D-fucose, methyl-alpha-D-galactopyranoside, methyl-alpha-D-glucopyranoside, N-acetyl-glucosamine, N-acetyl-mannosamine, D-fructose, alpha-D-lactose, beta-D-lactose, D-lactulose, D-sucrose, fucoidan or glycoproteins thyroglobulin and ovalmucoid. This is Halilectin 3, beta chain from Haliclona caerulea (Blue Caribbean sponge).